The chain runs to 356 residues: sn-glycerol-3-phosphate import ATP-binding protein UgpC (356 aa).

Positions 4–235 (LKLQAVTKSW…PASLFVASFI (232 aa)) constitute an ABC transporter domain. 37–44 (GPSGCGKS) contributes to the ATP binding site.

The protein belongs to the ABC transporter superfamily. sn-glycerol-3-phosphate importer (TC 3.A.1.1.3) family. In terms of assembly, the complex is composed of two ATP-binding proteins (UgpC), two transmembrane proteins (UgpA and UgpE) and a solute-binding protein (UgpB).

The protein localises to the cell inner membrane. It carries out the reaction sn-glycerol 3-phosphate(out) + ATP + H2O = sn-glycerol 3-phosphate(in) + ADP + phosphate + H(+). Part of the ABC transporter complex UgpBAEC involved in sn-glycerol-3-phosphate (G3P) import. Responsible for energy coupling to the transport system. This Escherichia coli O157:H7 protein is sn-glycerol-3-phosphate import ATP-binding protein UgpC.